The following is a 267-amino-acid chain: NAD kinase (267 aa).

The active-site Proton acceptor is Asp-45. NAD(+)-binding positions include 45-46 (DG), 121-122 (NE), Arg-147, Asp-149, 160-165 (TAYSKS), and Ala-184.

This sequence belongs to the NAD kinase family. A divalent metal cation serves as cofactor.

It is found in the cytoplasm. It catalyses the reaction NAD(+) + ATP = ADP + NADP(+) + H(+). Involved in the regulation of the intracellular balance of NAD and NADP, and is a key enzyme in the biosynthesis of NADP. Catalyzes specifically the phosphorylation on 2'-hydroxyl of the adenosine moiety of NAD to yield NADP. The protein is NAD kinase of Lactobacillus acidophilus (strain ATCC 700396 / NCK56 / N2 / NCFM).